Here is a 557-residue protein sequence, read N- to C-terminus: Membrane protein insertase YidC (557 aa).

The helical transmembrane segment at 1 to 21 (MNWLRNSLIAAILVITYVLFI) threads the bilayer. Residues 52–71 (SDDAVASSATEESDVPEVSV) are disordered. A run of 5 helical transmembrane segments spans residues 346–366 (TIDY…LDFI), 369–389 (LVGN…AVFF), 439–459 (FGGC…YWMI), 470–490 (FFLW…PLLM), and 517–537 (PIGF…YWVV).

The protein belongs to the OXA1/ALB3/YidC family. Type 1 subfamily. Interacts with the Sec translocase complex via SecD. Specifically interacts with transmembrane segments of nascent integral membrane proteins during membrane integration.

Its subcellular location is the cell inner membrane. Its function is as follows. Required for the insertion and/or proper folding and/or complex formation of integral membrane proteins into the membrane. Involved in integration of membrane proteins that insert both dependently and independently of the Sec translocase complex, as well as at least some lipoproteins. Aids folding of multispanning membrane proteins. This Saccharophagus degradans (strain 2-40 / ATCC 43961 / DSM 17024) protein is Membrane protein insertase YidC.